Here is a 179-residue protein sequence, read N- to C-terminus: Large ribosomal subunit protein uL5 (179 aa).

The protein belongs to the universal ribosomal protein uL5 family. In terms of assembly, part of the 50S ribosomal subunit; part of the 5S rRNA/L5/L18/L25 subcomplex. Contacts the 5S rRNA and the P site tRNA. Forms a bridge to the 30S subunit in the 70S ribosome.

Functionally, this is one of the proteins that bind and probably mediate the attachment of the 5S RNA into the large ribosomal subunit, where it forms part of the central protuberance. In the 70S ribosome it contacts protein S13 of the 30S subunit (bridge B1b), connecting the 2 subunits; this bridge is implicated in subunit movement. Contacts the P site tRNA; the 5S rRNA and some of its associated proteins might help stabilize positioning of ribosome-bound tRNAs. The protein is Large ribosomal subunit protein uL5 of Shewanella sp. (strain MR-4).